Reading from the N-terminus, the 794-residue chain is Phosphoribosylformylglycinamidine synthase subunit PurL (794 aa).

Residue His47 is part of the active site. 2 residues coordinate ATP: Tyr50 and Lys89. Glu91 is a Mg(2+) binding site. Residues 92–95 (SHNH) and Arg114 contribute to the substrate site. The Proton acceptor role is filled by His93. Asp115 lines the Mg(2+) pocket. Gln238 contributes to the substrate binding site. Asp266 provides a ligand contact to Mg(2+). 310 to 312 (ESQ) is a substrate binding site. Residues Asp522 and Gly559 each contribute to the ATP site. Mg(2+) is bound at residue Asn560. Residue Ser562 participates in substrate binding.

The protein belongs to the FGAMS family. Monomer. Part of the FGAM synthase complex composed of 1 PurL, 1 PurQ and 2 PurS subunits.

It is found in the cytoplasm. It carries out the reaction N(2)-formyl-N(1)-(5-phospho-beta-D-ribosyl)glycinamide + L-glutamine + ATP + H2O = 2-formamido-N(1)-(5-O-phospho-beta-D-ribosyl)acetamidine + L-glutamate + ADP + phosphate + H(+). It participates in purine metabolism; IMP biosynthesis via de novo pathway; 5-amino-1-(5-phospho-D-ribosyl)imidazole from N(2)-formyl-N(1)-(5-phospho-D-ribosyl)glycinamide: step 1/2. Part of the phosphoribosylformylglycinamidine synthase complex involved in the purines biosynthetic pathway. Catalyzes the ATP-dependent conversion of formylglycinamide ribonucleotide (FGAR) and glutamine to yield formylglycinamidine ribonucleotide (FGAM) and glutamate. The FGAM synthase complex is composed of three subunits. PurQ produces an ammonia molecule by converting glutamine to glutamate. PurL transfers the ammonia molecule to FGAR to form FGAM in an ATP-dependent manner. PurS interacts with PurQ and PurL and is thought to assist in the transfer of the ammonia molecule from PurQ to PurL. The chain is Phosphoribosylformylglycinamidine synthase subunit PurL from Prochlorococcus marinus (strain MIT 9303).